The chain runs to 87 residues: DNA-directed RNA polymerase subunit omega (87 aa).

The protein belongs to the RNA polymerase subunit omega family. In terms of assembly, the RNAP catalytic core consists of 2 alpha, 1 beta, 1 beta' and 1 omega subunit. When a sigma factor is associated with the core the holoenzyme is formed, which can initiate transcription.

It carries out the reaction RNA(n) + a ribonucleoside 5'-triphosphate = RNA(n+1) + diphosphate. Its function is as follows. Promotes RNA polymerase assembly. Latches the N- and C-terminal regions of the beta' subunit thereby facilitating its interaction with the beta and alpha subunits. In Pseudomonas putida (strain ATCC 700007 / DSM 6899 / JCM 31910 / BCRC 17059 / LMG 24140 / F1), this protein is DNA-directed RNA polymerase subunit omega.